Here is a 119-residue protein sequence, read N- to C-terminus: Immunoglobulin heavy variable 3-72 (119 aa).

Residues 1–19 form the signal peptide; that stretch reads MEFGLSWVFLVVILQGVQC. A framework-1 region spans residues 20 to 44; it reads EVQLVESGGGLVQPGGSLRLSCAAS. The Ig-like domain occupies 20–119; it reads EVQLVESGGG…EDTAVYYCAR (100 aa). Cys41 and Cys117 are disulfide-bonded. Positions 45–52 are complementarity-determining-1; it reads GFTFSDHY. The interval 53 to 69 is framework-2; it reads MDWVRQAPGKGLEWVGR. A complementarity-determining-2 region spans residues 70-79; the sequence is TRNKANSYTT. The segment at 80–117 is framework-3; it reads EYAASVKGRFTISRDDSKNSLYLQMNSLKTEDTAVYYC. The interval 118–119 is complementarity-determining-3; that stretch reads AR.

Immunoglobulins are composed of two identical heavy chains and two identical light chains; disulfide-linked.

The protein localises to the secreted. It is found in the cell membrane. V region of the variable domain of immunoglobulin heavy chains that participates in the antigen recognition. Immunoglobulins, also known as antibodies, are membrane-bound or secreted glycoproteins produced by B lymphocytes. In the recognition phase of humoral immunity, the membrane-bound immunoglobulins serve as receptors which, upon binding of a specific antigen, trigger the clonal expansion and differentiation of B lymphocytes into immunoglobulins-secreting plasma cells. Secreted immunoglobulins mediate the effector phase of humoral immunity, which results in the elimination of bound antigens. The antigen binding site is formed by the variable domain of one heavy chain, together with that of its associated light chain. Thus, each immunoglobulin has two antigen binding sites with remarkable affinity for a particular antigen. The variable domains are assembled by a process called V-(D)-J rearrangement and can then be subjected to somatic hypermutations which, after exposure to antigen and selection, allow affinity maturation for a particular antigen. In Homo sapiens (Human), this protein is Immunoglobulin heavy variable 3-72.